The following is a 172-amino-acid chain: Disulfide bond formation protein B (172 aa).

The Cytoplasmic portion of the chain corresponds to M1 to Q11. The chain crosses the membrane as a helical span at residues F12 to Y28. Over V29 to I46 the chain is Periplasmic. C38 and C41 are joined by a disulfide. The chain crosses the membrane as a helical span at residues A47–P63. Residues R64 to K70 are Cytoplasmic-facing. A helical membrane pass occupies residues V71–A88. Over R89–M145 the chain is Periplasmic. A disulfide bridge links C104 with C131. Residues W146 to K164 form a helical membrane-spanning segment. Residues A165–H172 are Cytoplasmic-facing.

The protein belongs to the DsbB family.

It is found in the cell inner membrane. In terms of biological role, required for disulfide bond formation in some periplasmic proteins. Acts by oxidizing the DsbA protein. This Xanthomonas oryzae pv. oryzae (strain MAFF 311018) protein is Disulfide bond formation protein B.